A 60-amino-acid chain; its full sequence is Cytotoxin 5 (60 aa).

Intrachain disulfides connect C3/C21, C14/C38, C42/C53, and C54/C59.

This sequence belongs to the three-finger toxin family. Short-chain subfamily. Type IA cytotoxin sub-subfamily. In terms of assembly, monomer in solution; Homodimer and oligomer in the presence of negatively charged lipids forming a pore with a size ranging between 20 and 30 Angstroms. As to expression, expressed by the venom gland.

Its subcellular location is the secreted. It is found in the target cell membrane. Its function is as follows. Shows cytolytic activity on many different cells by forming pore in lipid membranes. In vivo, increases heart rate or kills the animal by cardiac arrest. In addition, it binds to heparin with high affinity, interacts with Kv channel-interacting protein 1 (KCNIP1) in a calcium-independent manner, and binds to integrin alpha-V/beta-3 (ITGAV/ITGB3) with moderate affinity. The chain is Cytotoxin 5 from Naja haje haje (Egyptian cobra).